Reading from the N-terminus, the 484-residue chain is MKSSVEQLSPTRVRIKVEVPFAELEPDFQRAYKELAKQVRLPGFRPGRAPVKLLEARFGREAMLDQIVNDAVPSRYGQALAESEIQPLGRPDIEVTQKEYGQDLAFTAEVDVRPEIALPDLTGLSVSVDAIEATDDEVNAELESLRARFGTLTGVERPVATGDFISIDLSAAVDGEDVPNAAAEGLSHEVRSGRLIAGLDDAVVGLSVDESRVFTAKLAAGDHAGRDAEVTVTVKSVKERELPEPDDEFAQLASEFDTIDELRASLREQVLQAKRVGQAEQIRNATIDALLERVDVPTPESYVQAQYEGVLHSALSGINNDEARFNELLVEQGSSRDAFDAEARTASEKDVKRQLLLDALADDLKVQVGQEDLTERLVLTSRQYGIEPQQLFVYLQENNQLPSMFADVRRELAVKAVAQAATVTDTDGNTIDTSEFFGKPPENDVTDLLDDDADGDAGVDADGDTENSAEPADADSADTAQGAG.

Residues 162 to 243 (GDFISIDLSA…VKSVKERELP (82 aa)) form the PPIase FKBP-type domain. Positions 427-484 (DGNTIDTSEFFGKPPENDVTDLLDDDADGDAGVDADGDTENSAEPADADSADTAQGAG) are disordered. Residues 444-476 (DVTDLLDDDADGDAGVDADGDTENSAEPADADS) show a composition bias toward acidic residues.

It belongs to the FKBP-type PPIase family. Tig subfamily.

It is found in the cytoplasm. It carries out the reaction [protein]-peptidylproline (omega=180) = [protein]-peptidylproline (omega=0). In terms of biological role, involved in protein export. Acts as a chaperone by maintaining the newly synthesized protein in an open conformation. Functions as a peptidyl-prolyl cis-trans isomerase. This Mycobacterium ulcerans (strain Agy99) protein is Trigger factor.